The sequence spans 201 residues: MKLSDVQKRLQAPFPAHAVAWKPGVITKDRSRALMLAHIDARNVQDRLDAVCPDAWSFEVEVVPGTRLPTVKGRLTVLGVSREDIGEAPEGDLGTLKAAASDALKRCAVQFGIGRYLYDLPKQWVAWNDAKREPVSPPELPEWARPDHERSPGGAHLVQAMDQLRYEMPEDLELQREVYKHLKAALGSLHPISGGNQGRAA.

It belongs to the RAD52 family. In terms of assembly, the truncated form (1-160) of DdrA forms heptameric rings that can assemble into a 3-ring structure.

Its function is as follows. ssDNA-binding protein that contributes to the ionizing radiation resistance of D.deserti. Plays a role in DNA repair and genome reconstitution, in a RecA-independent process, since DdrA is essential for recovery from severe genomic fragmentation as a result of exposure to severe levels of ionizing radiation in an environment lacking nutrients. In vitro, binds to the 3'-ends of single-stranded DNA, and probably protects them from nuclease degradation. Thus, DdrA is part of a DNA end-protection system that helps to preserve genome integrity following irradiation or desiccation. In Deinococcus deserti (strain DSM 17065 / CIP 109153 / LMG 22923 / VCD115), this protein is Single-stranded DNA-binding protein DdrA (ddrA).